Reading from the N-terminus, the 513-residue chain is Zinc finger CCCH-type with G patch domain-containing protein (513 aa).

The segment at 155-178 (PCSYYLEGECRFDEAKCRFSHGAL) adopts a C3H1-type zinc-finger fold. Composition is skewed to acidic residues over residues 252-261 (DQDEDDELSS) and 273-283 (SDEAESDMDDL). A disordered region spans residues 252–283 (DQDEDDELSSEESTSSMRDASSDEAESDMDDL). One can recognise a G-patch domain in the interval 312 to 358 (TRGIGSKLMEKMGYIHGTGLGSDGRGIVTPVSAQILPQGRSLDACME). Positions 477–495 (QVQMQSHKQELATLQAQER) are enriched in polar residues. A disordered region spans residues 477-513 (QVQMQSHKQELATLQAQERSLSKEQQTRKSKNKMFEF). Residues 496-513 (SLSKEQQTRKSKNKMFEF) show a composition bias toward basic and acidic residues.

The protein resides in the nucleus. In terms of biological role, transcription repressor. The protein is Zinc finger CCCH-type with G patch domain-containing protein of Drosophila simulans (Fruit fly).